Reading from the N-terminus, the 744-residue chain is MEQTYQYAWIIPFLPLPVPMLIGLGLFLFPTATKSLRRMWAFQSVLLLSIVMIFSMNLSIQQINSSSAYQYVWSWIINNDVSLEFGYLIDPLTSIMSILITTVGILVLIYSDNYMSHDHGYLRFFVYMSFFSTSMLGLVTSSNLIQIYIFWELVGICSYLLIGFWFTRPVAAKACQKAFVTNRVGDFGLLLGILGFYWITGSFEFRNLFQIFNNLISNNEVNFLFVTLCAVLLFAGAIAKSAQFPLHVWLPDAMEGPTPISALIHAATMVAAGIFLVARLLPLFIVIPHIMNFISLIGIITVFLGATLALAQKDIKRGLAYSTMSQLGYMMLALGMGSYRSALFHLITHAYSKALLFLGSGSVIHSMETLVGYCPKKSQNMVLMGGLTKHVPITKTSFLLGTLSLCGIPPLACFWSKDEILNDSWLYSPIFAIIAWSTAGLTAFYMCRIYLLTFEGHLNVHFQNYSGKKNTPFYSISLWGKEGSKISNKNFSLITLLKMKKDGRPSFFSNKVYKIDENVRNMIQPFLSIPHFGNTKTYSYPYESDNTMLFPILILVLFTLFVGFLGIPFNQDGVDLDILSKWLTPSINLLHKNSNNSIDWYEFCKDAVFSVSISSFGIFIAFFLYKPVYSSFQNLDLINSFVKMGPKRIFSDKIKKVIYDWSYNRGYIDAFYETFLTVGMRNLAKFAHFFDRRIIDGMPNGVGLMSFFVAEVIKSVGGGRISSYLFFYFSYVSIFLLIYYFLNF.

The next 16 membrane-spanning stretches (helical) occupy residues 9–29 (WIIP…LFLF), 40–60 (WAFQ…NLSI), 89–109 (IDPL…LVLI), 125–145 (FVYM…SNLI), 147–167 (IYIF…FWFT), 185–205 (GDFG…SFEF), 219–239 (NEVN…GAIA), 258–278 (TPIS…FLVA), 290–312 (IMNF…ALAQ), 327–347 (LGYM…FHLI), 354–374 (ALLF…VGYC), 396–416 (TSFL…CFWS), 425–445 (WLYS…TAFY), 549–569 (LFPI…GIPF), 608–628 (VFSV…YKPV), and 724–744 (YLFF…FLNF).

Belongs to the complex I subunit 5 family. NDH is composed of at least 16 different subunits, 5 of which are encoded in the nucleus.

The protein localises to the plastid. It is found in the chloroplast thylakoid membrane. It carries out the reaction a plastoquinone + NADH + (n+1) H(+)(in) = a plastoquinol + NAD(+) + n H(+)(out). The enzyme catalyses a plastoquinone + NADPH + (n+1) H(+)(in) = a plastoquinol + NADP(+) + n H(+)(out). In terms of biological role, NDH shuttles electrons from NAD(P)H:plastoquinone, via FMN and iron-sulfur (Fe-S) centers, to quinones in the photosynthetic chain and possibly in a chloroplast respiratory chain. The immediate electron acceptor for the enzyme in this species is believed to be plastoquinone. Couples the redox reaction to proton translocation, and thus conserves the redox energy in a proton gradient. The protein is NAD(P)H-quinone oxidoreductase subunit 5, chloroplastic (ndhF) of Mutisia acuminata.